Consider the following 312-residue polypeptide: Probable N-glycosylase/DNA lyase (312 aa).

The disordered stretch occupies residues 1 to 22 (MRIPVGDFDLEMTQRSGQTSQP). Positions 13-22 (TQRSGQTSQP) are enriched in polar residues. K235 is an active-site residue.

This sequence belongs to the type-1 OGG1 family.

It catalyses the reaction 2'-deoxyribonucleotide-(2'-deoxyribose 5'-phosphate)-2'-deoxyribonucleotide-DNA = a 3'-end 2'-deoxyribonucleotide-(2,3-dehydro-2,3-deoxyribose 5'-phosphate)-DNA + a 5'-end 5'-phospho-2'-deoxyribonucleoside-DNA + H(+). In terms of biological role, DNA repair enzyme that incises DNA at 8-oxoG residues. Excises 7,8-dihydro-8-oxoguanine and 2,6-diamino-4-hydroxy-5-N-methylformamidopyrimidine (FAPY) from damaged DNA. Has a beta-lyase activity that nicks DNA 3' to the lesion. In Methanothermobacter thermautotrophicus (strain ATCC 29096 / DSM 1053 / JCM 10044 / NBRC 100330 / Delta H) (Methanobacterium thermoautotrophicum), this protein is Probable N-glycosylase/DNA lyase.